A 249-amino-acid polypeptide reads, in one-letter code: Exosome complex component Rrp41 (249 aa).

This sequence belongs to the RNase PH family. Rrp41 subfamily. In terms of assembly, component of the archaeal exosome complex. Forms a hexameric ring-like arrangement composed of 3 Rrp41-Rrp42 heterodimers. The hexameric ring associates with a trimer of Rrp4 and/or Csl4 subunits.

Its subcellular location is the cytoplasm. In terms of biological role, catalytic component of the exosome, which is a complex involved in RNA degradation. Has 3'-&gt;5' exoribonuclease activity. Can also synthesize heteromeric RNA-tails. The sequence is that of Exosome complex component Rrp41 from Pyrococcus abyssi (strain GE5 / Orsay).